Reading from the N-terminus, the 287-residue chain is Bifunctional protein FolD (287 aa).

NADP(+) contacts are provided by residues 160-162 (GRS), Ser189, and Thr230.

Belongs to the tetrahydrofolate dehydrogenase/cyclohydrolase family. Homodimer.

It carries out the reaction (6R)-5,10-methylene-5,6,7,8-tetrahydrofolate + NADP(+) = (6R)-5,10-methenyltetrahydrofolate + NADPH. The catalysed reaction is (6R)-5,10-methenyltetrahydrofolate + H2O = (6R)-10-formyltetrahydrofolate + H(+). It functions in the pathway one-carbon metabolism; tetrahydrofolate interconversion. Functionally, catalyzes the oxidation of 5,10-methylenetetrahydrofolate to 5,10-methenyltetrahydrofolate and then the hydrolysis of 5,10-methenyltetrahydrofolate to 10-formyltetrahydrofolate. The polypeptide is Bifunctional protein FolD (Chlamydia abortus (strain DSM 27085 / S26/3) (Chlamydophila abortus)).